Reading from the N-terminus, the 301-residue chain is Ribosomal protein L11 methyltransferase (301 aa).

The S-adenosyl-L-methionine site is built by Thr146, Gly167, Asp189, and Asn234.

It belongs to the methyltransferase superfamily. PrmA family.

The protein localises to the cytoplasm. It carries out the reaction L-lysyl-[protein] + 3 S-adenosyl-L-methionine = N(6),N(6),N(6)-trimethyl-L-lysyl-[protein] + 3 S-adenosyl-L-homocysteine + 3 H(+). In terms of biological role, methylates ribosomal protein L11. The chain is Ribosomal protein L11 methyltransferase from Acinetobacter baumannii (strain AB307-0294).